The sequence spans 412 residues: Light-independent protochlorophyllide reductase subunit N (412 aa).

3 residues coordinate [4Fe-4S] cluster: Cys-17, Cys-42, and Cys-103.

It belongs to the BchN/ChlN family. In terms of assembly, protochlorophyllide reductase is composed of three subunits; ChlL, ChlN and ChlB. Forms a heterotetramer of two ChlB and two ChlN subunits. [4Fe-4S] cluster is required as a cofactor.

The catalysed reaction is chlorophyllide a + oxidized 2[4Fe-4S]-[ferredoxin] + 2 ADP + 2 phosphate = protochlorophyllide a + reduced 2[4Fe-4S]-[ferredoxin] + 2 ATP + 2 H2O. It participates in porphyrin-containing compound metabolism; chlorophyll biosynthesis (light-independent). Component of the dark-operative protochlorophyllide reductase (DPOR) that uses Mg-ATP and reduced ferredoxin to reduce ring D of protochlorophyllide (Pchlide) to form chlorophyllide a (Chlide). This reaction is light-independent. The NB-protein (ChlN-ChlB) is the catalytic component of the complex. This is Light-independent protochlorophyllide reductase subunit N from Synechococcus sp. (strain CC9902).